A 298-amino-acid chain; its full sequence is 4-hydroxy-tetrahydrodipicolinate synthase (298 aa).

Pyruvate is bound at residue Thr-51. The Proton donor/acceptor role is filled by Tyr-139. Residue Lys-167 is the Schiff-base intermediate with substrate of the active site. Ile-209 is a pyruvate binding site.

Belongs to the DapA family. In terms of assembly, homotetramer; dimer of dimers.

Its subcellular location is the cytoplasm. It carries out the reaction L-aspartate 4-semialdehyde + pyruvate = (2S,4S)-4-hydroxy-2,3,4,5-tetrahydrodipicolinate + H2O + H(+). It functions in the pathway amino-acid biosynthesis; L-lysine biosynthesis via DAP pathway; (S)-tetrahydrodipicolinate from L-aspartate: step 3/4. In terms of biological role, catalyzes the condensation of (S)-aspartate-beta-semialdehyde [(S)-ASA] and pyruvate to 4-hydroxy-tetrahydrodipicolinate (HTPA). This chain is 4-hydroxy-tetrahydrodipicolinate synthase, found in Histophilus somni (strain 2336) (Haemophilus somnus).